We begin with the raw amino-acid sequence, 479 residues long: Glutamate--tRNA ligase (479 aa).

The 'HIGH' region signature appears at 21 to 31 (PSPTGYLHVGG). The 'KMSKS' region signature appears at 248–252 (KLSKR). An ATP-binding site is contributed by K251.

This sequence belongs to the class-I aminoacyl-tRNA synthetase family. Glutamate--tRNA ligase type 1 subfamily. Monomer.

It is found in the cytoplasm. The enzyme catalyses tRNA(Glu) + L-glutamate + ATP = L-glutamyl-tRNA(Glu) + AMP + diphosphate. Catalyzes the attachment of glutamate to tRNA(Glu) in a two-step reaction: glutamate is first activated by ATP to form Glu-AMP and then transferred to the acceptor end of tRNA(Glu). This is Glutamate--tRNA ligase from Actinobacillus pleuropneumoniae serotype 7 (strain AP76).